The primary structure comprises 444 residues: Elongation factor 1-alpha (444 aa).

Residues 15–238 enclose the tr-type G domain; sequence KPHINLAVVG…DSFQPPQRPV (224 aa). The G1 stretch occupies residues 24–31; sequence GHVDNGKS. 24 to 31 contributes to the GTP binding site; the sequence is GHVDNGKS. S31 is a binding site for Mg(2+). The interval 80-84 is G2; it reads GVTIE. Positions 101–104 are G3; it reads DLPG. GTP contacts are provided by residues 101–105 and 163–166; these read DLPGH and NKMD. The tract at residues 163–166 is G4; it reads NKMD. Residues 202–204 form a G5 region; that stretch reads SAI.

This sequence belongs to the TRAFAC class translation factor GTPase superfamily. Classic translation factor GTPase family. EF-Tu/EF-1A subfamily.

The protein localises to the cytoplasm. It catalyses the reaction GTP + H2O = GDP + phosphate + H(+). Functionally, GTP hydrolase that promotes the GTP-dependent binding of aminoacyl-tRNA to the A-site of ribosomes during protein biosynthesis. The sequence is that of Elongation factor 1-alpha from Pyrobaculum aerophilum (strain ATCC 51768 / DSM 7523 / JCM 9630 / CIP 104966 / NBRC 100827 / IM2).